The chain runs to 573 residues: Putative inorganic phosphate transporter C1683.01 (573 aa).

Transmembrane regions (helical) follow at residues 48–68 (MMLA…INLV), 100–120 (AASN…GDFF), 124–144 (FVYG…IAMP), 154–174 (MMWV…DYPM), 194–214 (LIFA…IILL), and 230–250 (LEGV…GVLI). Over residues 261–270 (FKNSQQLNSG) the composition is skewed to polar residues. Disordered regions lie at residues 261–280 (FKNS…TSLN) and 290–312 (PSVT…RSNT). 6 consecutive transmembrane segments (helical) span residues 348 to 368 (HLLG…GVNL), 397 to 417 (LIIA…LVEI), 422 to 442 (WIQL…AGRW), 451 to 471 (FACF…TTFI), 487 to 507 (GISA…FNFL), and 510 to 530 (IIGY…GILF).

This sequence belongs to the major facilitator superfamily. Sugar transporter (TC 2.A.1.1) family.

It is found in the endoplasmic reticulum membrane. Functionally, high-affinity transporter for external inorganic phosphate. In Schizosaccharomyces pombe (strain 972 / ATCC 24843) (Fission yeast), this protein is Putative inorganic phosphate transporter C1683.01.